The primary structure comprises 497 residues: NADH-quinone oxidoreductase subunit N (497 aa).

14 helical membrane-spanning segments follow: residues 14–34 (LMAM…MLSI), 45–65 (SLTV…WGLF), 86–106 (IFYS…AYPW), 116–136 (EFYL…SAQH), 137–157 (LAAV…LLGY), 171–191 (YFVL…MLYA), 215–235 (ILAG…LVPF), 253–273 (FLGT…FLYV), 281–301 (LNTA…LMAL), 309–329 (LLGY…IALH), 338–358 (VAVY…VVSL), 385–405 (AAVM…LGFI), 420–439 (WVLT…YYLR), and 461–481 (AFTA…VFGI).

It belongs to the complex I subunit 2 family. NDH-1 is composed of 13 different subunits. Subunits NuoA, H, J, K, L, M, N constitute the membrane sector of the complex.

Its subcellular location is the cell membrane. It catalyses the reaction a quinone + NADH + 5 H(+)(in) = a quinol + NAD(+) + 4 H(+)(out). NDH-1 shuttles electrons from NADH, via FMN and iron-sulfur (Fe-S) centers, to quinones in the respiratory chain. The immediate electron acceptor for the enzyme in this species is believed to be ubiquinone. Couples the redox reaction to proton translocation (for every two electrons transferred, four hydrogen ions are translocated across the cytoplasmic membrane), and thus conserves the redox energy in a proton gradient. The sequence is that of NADH-quinone oxidoreductase subunit N from Hamiltonella defensa subsp. Acyrthosiphon pisum (strain 5AT).